A 49-amino-acid chain; its full sequence is Large ribosomal subunit protein eL40 (49 aa).

This sequence belongs to the eukaryotic ribosomal protein eL40 family.

The protein is Large ribosomal subunit protein eL40 of Methanococcoides burtonii (strain DSM 6242 / NBRC 107633 / OCM 468 / ACE-M).